A 37-amino-acid polypeptide reads, in one-letter code: Potassium channel toxin alpha-KTx 3.13 (37 aa).

Cystine bridges form between C7–C27, C13–C32, and C17–C34. K37 is modified (lysine amide).

This sequence belongs to the short scorpion toxin superfamily. Potassium channel inhibitor family. Alpha-KTx 03 subfamily. In terms of tissue distribution, expressed by the venom gland.

It is found in the secreted. In terms of biological role, blocks voltage-gated potassium channels Kv1.1/KCNA1 (IC(50)=203.15 pM), Kv1.2/KCNA2 (IC(50)=8.92 nM) from rat and human Kv1.3 KCNA3/KCNA3 (IC(50)=171 pM) potently. At 2 uM, also blocks Shaker IR and has a moderate effect on rat Kv1.6/KCNA6. This Mesobuthus eupeus (Lesser Asian scorpion) protein is Potassium channel toxin alpha-KTx 3.13.